The sequence spans 65 residues: Large ribosomal subunit protein bL33c (65 aa).

Belongs to the bacterial ribosomal protein bL33 family.

Its subcellular location is the plastid. The protein resides in the chloroplast. The polypeptide is Large ribosomal subunit protein bL33c (Pyropia yezoensis (Susabi-nori)).